The following is a 388-amino-acid chain: Na(+)/H(+) antiporter NhaA (388 aa).

Transmembrane regions (helical) follow at residues 8–28, 57–77, 93–113, 123–143, 152–172, 175–195, 210–230, 254–274, 278–298, 328–348, and 361–381; these read FFSA…LGLL, LAEF…IAEI, ILPL…YGLI, GWAI…LALG, VWLM…IALF, SHLN…MIGL, GVVL…AGVI, IIAP…SMGM, AMSF…GLFL, LFGL…IAEL, and YGIL…LRFL.

This sequence belongs to the NhaA Na(+)/H(+) (TC 2.A.33) antiporter family.

Its subcellular location is the cell inner membrane. The enzyme catalyses Na(+)(in) + 2 H(+)(out) = Na(+)(out) + 2 H(+)(in). In terms of biological role, na(+)/H(+) antiporter that extrudes sodium in exchange for external protons. The chain is Na(+)/H(+) antiporter NhaA from Zymomonas mobilis subsp. mobilis (strain ATCC 31821 / ZM4 / CP4).